A 244-amino-acid polypeptide reads, in one-letter code: LexA repressor (244 aa).

The interval 1-24 (MSDSSDTTVDGASDGASDGASGAD) is disordered. The span at 10–24 (DGASDGASDGASGAD) shows a compositional bias: low complexity. Residues 58 to 78 (IREIGDAVGLTSTSSVAHQLR) constitute a DNA-binding region (H-T-H motif). Residues Ser168 and Lys205 each act as for autocatalytic cleavage activity in the active site.

Belongs to the peptidase S24 family. In terms of assembly, homodimer.

The catalysed reaction is Hydrolysis of Ala-|-Gly bond in repressor LexA.. Represses a number of genes involved in the response to DNA damage (SOS response), including recA and lexA. In the presence of single-stranded DNA, RecA interacts with LexA causing an autocatalytic cleavage which disrupts the DNA-binding part of LexA, leading to derepression of the SOS regulon and eventually DNA repair. The protein is LexA repressor of Mycobacterium marinum (strain ATCC BAA-535 / M).